The chain runs to 319 residues: 1-aminocyclopropane-1-carboxylate oxidase (319 aa).

The region spanning 152–253 (GPNFGSKVSN…RMSLASFYNP (102 aa)) is the Fe2OG dioxygenase domain. Fe cation contacts are provided by His177, Asp179, and His234.

Belongs to the iron/ascorbate-dependent oxidoreductase family. Fe cation serves as cofactor.

It carries out the reaction 1-aminocyclopropane-1-carboxylate + L-ascorbate + O2 = ethene + L-dehydroascorbate + hydrogen cyanide + CO2 + 2 H2O. It participates in alkene biosynthesis; ethylene biosynthesis via S-adenosyl-L-methionine; ethylene from S-adenosyl-L-methionine: step 2/2. In Nicotiana tabacum (Common tobacco), this protein is 1-aminocyclopropane-1-carboxylate oxidase (ACO).